The primary structure comprises 147 residues: Hemoglobin subunit delta (147 aa).

The 145-residue stretch at 3-147 (NLTAAEKTQV…VANALAHKYH (145 aa)) folds into the Globin domain. Residues histidine 64 and histidine 93 each contribute to the heme b site.

Belongs to the globin family. Heterotetramer of two delta chains and two alpha chains. In terms of tissue distribution, red blood cells.

The sequence is that of Hemoglobin subunit delta (HBD) from Elephas maximus (Indian elephant).